The sequence spans 130 residues: Larval cuticle protein 1 (130 aa).

A signal peptide spans 1–16; the sequence is MFKFVMICAVLGLAVA. The 62-residue stretch at 43–104 folds into the Chitin-binding type R&amp;R domain; it reads ADGFDSSLHT…PSGAWIPTPP (62 aa).

In terms of biological role, component of the larval cuticle. The sequence is that of Larval cuticle protein 1 (Lcp1) from Drosophila melanogaster (Fruit fly).